A 427-amino-acid polypeptide reads, in one-letter code: Serine--tRNA ligase (427 aa).

231–233 (TAE) contacts L-serine. An ATP-binding site is contributed by 262–264 (RSE). Glu285 lines the L-serine pocket. Residue 349–352 (EISS) coordinates ATP. Ser385 provides a ligand contact to L-serine.

The protein belongs to the class-II aminoacyl-tRNA synthetase family. Type-1 seryl-tRNA synthetase subfamily. Homodimer. The tRNA molecule binds across the dimer.

It localises to the cytoplasm. It catalyses the reaction tRNA(Ser) + L-serine + ATP = L-seryl-tRNA(Ser) + AMP + diphosphate + H(+). The enzyme catalyses tRNA(Sec) + L-serine + ATP = L-seryl-tRNA(Sec) + AMP + diphosphate + H(+). The protein operates within aminoacyl-tRNA biosynthesis; selenocysteinyl-tRNA(Sec) biosynthesis; L-seryl-tRNA(Sec) from L-serine and tRNA(Sec): step 1/1. Catalyzes the attachment of serine to tRNA(Ser). Is also able to aminoacylate tRNA(Sec) with serine, to form the misacylated tRNA L-seryl-tRNA(Sec), which will be further converted into selenocysteinyl-tRNA(Sec). In Listeria innocua serovar 6a (strain ATCC BAA-680 / CLIP 11262), this protein is Serine--tRNA ligase.